We begin with the raw amino-acid sequence, 127 residues long: Class I hydrophobin 1 (127 aa).

A signal peptide spans 1–20 (MLSLLSKAVSLAILVTAVVA). 4 disulfides stabilise this stretch: cysteine 53/cysteine 108, cysteine 60/cysteine 102, cysteine 61/cysteine 94, and cysteine 109/cysteine 122. A glycan (N-linked (GlcNAc...) asparagine) is linked at asparagine 66.

The protein belongs to the fungal hydrophobin family. In terms of assembly, self-assembles to form functional amyloid fibrils called rodlets. Self-assembly into fibrillar rodlets occurs spontaneously at hydrophobic:hydrophilic interfaces and the rodlets further associate laterally to form amphipathic monolayers. In terms of tissue distribution, expressed everywhere in the mycelial tissues of developing fruiting bodies except for the top parts of the pileus (cap) and for the prehymenophore; but high level of the transcript is detected in the parts surrounding the prehymenophore.

It is found in the secreted. The protein localises to the cell wall. In terms of biological role, aerial growth, conidiation, and dispersal of filamentous fungi in the environment rely upon a capability of their secreting small amphipathic proteins called hydrophobins (HPBs) with low sequence identity. Class I can self-assemble into an outermost layer of rodlet bundles on aerial cell surfaces, conferring cellular hydrophobicity that supports fungal growth, development and dispersal; whereas Class II form highly ordered films at water-air interfaces through intermolecular interactions but contribute nothing to the rodlet structure. Hyd1 is a class I hydrophobin that plays a role in fruiting body initiation rather than in mature fruit body maintenance. Seems to be involved in the formation in the extracellular matrix of lined air channels with a hydrophobic membrane. These channels may help to provide gas exchange during respiration in mycelial tissues of developing fruiting bodies and are formed all over the mycelial tissues of these developing fruiting bodies except for the top parts of the pileus (cap) and for the prehymenophore. The sequence is that of Class I hydrophobin 1 from Lentinula edodes (Shiitake mushroom).